Here is a 298-residue protein sequence, read N- to C-terminus: Probable endonuclease 4 (298 aa).

Positions 69, 111, 146, 180, 183, 215, 228, 230, and 260 each coordinate Zn(2+).

The protein belongs to the AP endonuclease 2 family. Zn(2+) serves as cofactor.

The enzyme catalyses Endonucleolytic cleavage to 5'-phosphooligonucleotide end-products.. Endonuclease IV plays a role in DNA repair. It cleaves phosphodiester bonds at apurinic or apyrimidinic (AP) sites, generating a 3'-hydroxyl group and a 5'-terminal sugar phosphate. The polypeptide is Probable endonuclease 4 (Bacillus cereus (strain AH187)).